The following is a 171-amino-acid chain: MNKRNKVKHLNRNKGHRDALINNMITSLFKYERIESTQAKLKVVRSHAEKLITRAKKNLVTDLKPEVQLHNKREVMKRIKDREVVVKLFEDIAKRFETKNGGYTRVLKLVNRISDNSEVGILELTSRKERSTLLKERIEKREIQTKAREEKRATRKSNSAPVSKETTSKKK.

Residues 140-152 (KREIQTKAREEKR) are compositionally biased toward basic and acidic residues. A disordered region spans residues 140–171 (KREIQTKAREEKRATRKSNSAPVSKETTSKKK). The span at 156–165 (KSNSAPVSKE) shows a compositional bias: polar residues.

This sequence belongs to the bacterial ribosomal protein bL17 family. In terms of assembly, part of the 50S ribosomal subunit. Contacts protein L32.

This is Large ribosomal subunit protein bL17 from Leptospira interrogans serogroup Icterohaemorrhagiae serovar copenhageni (strain Fiocruz L1-130).